A 235-amino-acid chain; its full sequence is Large ribosomal subunit protein uL4 (235 aa).

Positions 45–75 are disordered; that stretch reads RAGTASTKTRGEVSGGGRKPWPQKHTGRARH. Basic residues predominate over residues 65 to 75; the sequence is WPQKHTGRARH.

This sequence belongs to the universal ribosomal protein uL4 family. In terms of assembly, part of the 50S ribosomal subunit.

Functionally, one of the primary rRNA binding proteins, this protein initially binds near the 5'-end of the 23S rRNA. It is important during the early stages of 50S assembly. It makes multiple contacts with different domains of the 23S rRNA in the assembled 50S subunit and ribosome. This protein only weakly controls expression of the E.coli S10 operon. It is incorporated into E.coli ribosomes, however it is not as firmly associated as the endogenous protein. Its function is as follows. Forms part of the polypeptide exit tunnel. This is Large ribosomal subunit protein uL4 (rplD) from Thermotoga maritima (strain ATCC 43589 / DSM 3109 / JCM 10099 / NBRC 100826 / MSB8).